The chain runs to 23 residues: Maculatin-1.2 (23 aa).

Ala23 is subject to Alanine amide.

In terms of tissue distribution, expressed by the skin dorsal glands.

Its subcellular location is the secreted. Functionally, shows antibacterial activity against S.aureus and S.uberis. The protein is Maculatin-1.2 of Ranoidea genimaculata (Brown-spotted tree frog).